Reading from the N-terminus, the 257-residue chain is Global transcriptional regulator CodY (257 aa).

The interval 1–155 (MSLLSKTREL…AATVLGMEIL (155 aa)) is GAF domain. The segment at residues 203–222 (ASKVADRVGITRSVIVNALR) is a DNA-binding region (H-T-H motif).

This sequence belongs to the CodY family.

It is found in the cytoplasm. In terms of biological role, DNA-binding global transcriptional regulator which is involved in the adaptive response to starvation and acts by directly or indirectly controlling the expression of numerous genes in response to nutrient availability. During rapid exponential growth, CodY is highly active and represses genes whose products allow adaptation to nutrient depletion. The chain is Global transcriptional regulator CodY from Staphylococcus carnosus (strain TM300).